The sequence spans 619 residues: P-granule-associated protein deps-1 (619 aa).

Positions 62 to 101 (NFDNIEEAKNLERRSKIPLKFGEVILWNESDCDHDKRIIL) are required for prg-1 binding. Composition is skewed to low complexity over residues 563 to 592 (SRAT…AATS) and 600 to 619 (GPSS…SSRV). The disordered stretch occupies residues 563 to 619 (SRATSARTTPAGSSIGSRSSIQSRASAATSVSSNRFVGPSSRRTPSGTPQSSTSSRV).

In terms of assembly, interacts (via N-terminus) with prg-1; the interaction is direct. May interact with edg-1. Expressed in germ cells.

It is found in the cytoplasmic granule. The protein localises to the cytoplasm. The protein resides in the perinuclear region. In terms of biological role, component of P-granules which is required for P-granule formation and integrity in adult germ cells. Promotes the accumulation of glh-1 mRNA and localization of pgl-1 to P-granules. Involved in RNA-mediated gene silencing (RNAi) in the germline. In particular, it is required for piwi-interacting RNA (piRNA) gene silencing and positively regulates the formation of secondary 22G-RNAs, which are RNA-dependent RNA polymerase-derived endo-siRNAs, typically 22 nucleotides in length with a 5'guanosine residue. Its role in RNAi may also be through positively regulating the expression of the dsRNA-binding protein rde-4. Plays a role in small RNA-directed transgenerational epigenetic inheritance. The polypeptide is P-granule-associated protein deps-1 (Caenorhabditis elegans).